The following is a 118-amino-acid chain: Thioredoxin H5 (118 aa).

Ala2 is modified (N-acetylalanine). One can recognise a Thioredoxin domain in the interval 2–113; it reads AGEGEVIACH…INEKLMKHGG (112 aa). Residues Cys39 and Cys42 each act as nucleophile in the active site. Residues Cys39 and Cys42 are joined by a disulfide bond.

The protein belongs to the thioredoxin family. Plant H-type subfamily. Interacts with MDH1.

The protein resides in the cytoplasm. Its function is as follows. Thiol-disulfide oxidoreductase involved in response to pathogens and oxidative stresses. Required for the response to victorin, a phytotoxin which induces programmed cell death in sensitive plants. Possesses insulin disulfide bonds reducing activity. The sequence is that of Thioredoxin H5 (TRX5) from Arabidopsis thaliana (Mouse-ear cress).